The following is a 367-amino-acid chain: Peptide chain release factor 2 (367 aa).

Gln254 is modified (N5-methylglutamine).

The protein belongs to the prokaryotic/mitochondrial release factor family. Post-translationally, methylated by PrmC. Methylation increases the termination efficiency of RF2.

It is found in the cytoplasm. Its function is as follows. Peptide chain release factor 2 directs the termination of translation in response to the peptide chain termination codons UGA and UAA. The polypeptide is Peptide chain release factor 2 (Neisseria meningitidis serogroup C / serotype 2a (strain ATCC 700532 / DSM 15464 / FAM18)).